Consider the following 344-residue polypeptide: Succinylglutamate desuccinylase (344 aa).

Zn(2+) contacts are provided by His63, Glu66, and His160. Glu224 is a catalytic residue.

This sequence belongs to the AspA/AstE family. Succinylglutamate desuccinylase subfamily. It depends on Zn(2+) as a cofactor.

The enzyme catalyses N-succinyl-L-glutamate + H2O = L-glutamate + succinate. It participates in amino-acid degradation; L-arginine degradation via AST pathway; L-glutamate and succinate from L-arginine: step 5/5. Functionally, transforms N(2)-succinylglutamate into succinate and glutamate. The chain is Succinylglutamate desuccinylase from Shewanella sp. (strain W3-18-1).